The following is a 326-amino-acid chain: tRNA-modifying protein YgfZ (326 aa).

2 residues coordinate folate: Trp27 and Trp189.

It belongs to the tRNA-modifying YgfZ family.

It is found in the cytoplasm. Functionally, folate-binding protein involved in regulating the level of ATP-DnaA and in the modification of some tRNAs. It is probably a key factor in regulatory networks that act via tRNA modification, such as initiation of chromosomal replication. The protein is tRNA-modifying protein YgfZ of Escherichia coli (strain SE11).